The primary structure comprises 897 residues: DNA endonuclease RBBP8 (897 aa).

The essential for binding to the MRN complex and for RPA focus formation on DNA damage stretch occupies residues 22–45; it reads DLWTKLKECHDREVQGLQVKVTKL. The stretch at 35-84 forms a coiled coil; it reads VQGLQVKVTKLKQERILDAQRLEEFFTKNQQLREQQKVLHETIKVLEDRL. The segment at 45–160 is required for interaction with LMO4, probably by stabilizing the interaction through RPPB8 dimerization; it reads LKQERILDAQ…AELECEEDVI (116 aa). Residues Lys62 and Lys115 each participate in a glycyl lysine isopeptide (Lys-Gly) (interchain with G-Cter in SUMO2) cross-link. A coiled-coil region spans residues 117-138; sequence ITELMNERNTLQEENKKLSEQL. Lys193 participates in a covalent cross-link: Glycyl lysine isopeptide (Lys-Gly) (interchain with G-Cter in SUMO2). Phosphoserine occurs at positions 233 and 276. The span at 292 to 307 shows a compositional bias: basic and acidic residues; that stretch reads KQPFEESTRNTEDSLR. The segment at 292 to 325 is disordered; that stretch reads KQPFEESTRNTEDSLRFSDSTSKTPPQEELPTRV. A Phosphothreonine; by CDK2 modification is found at Thr315. Ser326, Ser327, and Ser349 each carry phosphoserine. Residues Lys360 and Lys378 each participate in a glycyl lysine isopeptide (Lys-Gly) (interchain with G-Cter in SUMO2) cross-link. Phosphoserine is present on Ser379. Residues Lys396, Lys404, and Lys410 each participate in a glycyl lysine isopeptide (Lys-Gly) (interchain with G-Cter in SUMO2) cross-link. A disordered region spans residues 419–464; that stretch reads QNRTEYGKDSNTDKHLEPLKSLGGRTSKRKKTEEESEHEVSCPQAS. Basic and acidic residues predominate over residues 420 to 436; it reads NRTEYGKDSNTDKHLEP. Residues Lys438 and Lys449 each participate in a glycyl lysine isopeptide (Lys-Gly) (interchain with G-Cter in SUMO2) cross-link. The short motif at 490-494 is the PXDLS motif element; sequence PLDLS. Positions 509 to 557 are damage-recruitment motif; the sequence is SETSKNKFRQVTLYEALKTIPKGFSSSRKASDGNCTLPKDSPGEPCSQE. Lys526 participates in a covalent cross-link: Glycyl lysine isopeptide (Lys-Gly) (interchain with G-Cter in SUMO2); alternate. Glycyl lysine isopeptide (Lys-Gly) (interchain with G-Cter in SUMO2) cross-links involve residues Lys530, Lys572, and Lys578. Residue Lys604 forms a Glycyl lysine isopeptide (Lys-Gly) (interchain with G-Cter in SUMO2); alternate linkage. Residues Lys613, Lys638, and Lys640 each participate in a glycyl lysine isopeptide (Lys-Gly) (interchain with G-Cter in SUMO2) cross-link. The required for interaction with LMO4, probably by making physical contact with LMO4 stretch occupies residues 641–685; the sequence is SLQNNQDVSFENIQWSIDPGADLSQYKMDVTVIDTKDGSQSKLGG. Phosphoserine; by ATM is present on Ser664. Lys676 is covalently cross-linked (Glycyl lysine isopeptide (Lys-Gly) (interchain with G-Cter in SUMO2)). Ser679 is subject to Phosphoserine. The interval 704-723 is disordered; sequence KKQEQKGEKSSNEERKMNDS. Lys719 is covalently cross-linked (Glycyl lysine isopeptide (Lys-Gly) (interchain with G-Cter in SUMO2)). Phosphoserine is present on Ser723. Ser745 bears the Phosphoserine; by ATM mark. Residue Lys782 forms a Glycyl lysine isopeptide (Lys-Gly) (interchain with G-Cter in SUMO2) linkage. A KLHL15-binding motif is present at residues 840-842; the sequence is FRY. Thr847 is subject to Phosphothreonine; by CDK1. Thr859 is subject to Phosphothreonine; by ATR. Lys869 is covalently cross-linked (Glycyl lysine isopeptide (Lys-Gly) (interchain with G-Cter in SUMO2)). The segment at 873-897 is disordered; the sequence is DPCPRPKRRQPYNAIFSPKGKEQKT.

This sequence belongs to the COM1/SAE2/CtIP family. In terms of assembly, homotetramer; formed by antiparallel association of helical extensions protruding from the N-termini of two parallel coiled-coil dimers. Forms a dumbbell-shaped particle in which polar globular domains are held about 30 nm apart by a central rod. Homotetramerization is required for DNA-end resection and repair. Interacts (via the PXDLS motif) with CTBP1; the interaction is disrupted via binding of the adenovirus E1A to CTBP1. Component of the BRCA1-RBBP8 complex. Interacts (the Ser-327 phosphorylated form) with BRCA1 (via the C-terminal BRCT domains): the interaction occurs in the G2 phase, ubiquitinates RBBP8 and involves RBBP8 in BRCA1-dependent G2/M checkpoint control on DNA damage. Interacts with RB1. Interacts with the MRN complex; interacts directly with MRE11; the interaction is required for efficient homologous recombination (HR) and regulation of the MRN complex. Interacts directly with RAD50. Interacts (when phosphorylated by CDK1) with NBN; promoting association with the MRN complex. Interacts with LM04 (via the LIM zinc-binding 1 domain). Interacts with SIAH1. Interacts with RNF138. Interacts with EXD2. Interacts with CUL3 and KLHL15; this interaction leads to RBBP8 proteasomal degradation. Directly interacts with PIN1; this interaction depends upon RBBP8 phosphorylation, predominantly at Thr-315. Interacts with FZR1; this interaction leads to APC/C-mediated RBBP8 proteasomal degradation. Interacts with AUNIP; leading to recruitment of RBBP8 to sites of DNA damage. Interacts with SAMHD1. Interacts with HDGFL2. In terms of processing, hyperphosphorylation upon ionizing radiation results in dissociation from BRCA1. Phosphorylation at Thr-847 by CDK1 is essential for the recruitment to DNA and the DNA repair function. Phosphorylation at Thr-847 and Thr-859 promote interaction with NBN and recruitment to double-strand breaks (DSBs). Phosphorylated on Ser-327 as cells enter G2 phase. This phosphorylation is required for binding BRCA1 and for the G2/M DNA damage transition checkpoint control. Phosphorylation at Thr-315, probably catalyzed by CDK2, is required for PIN1-binding, while phosphorylation at Ser-276 serves as a PIN1 isomerization site. Phosphorylation at Thr-315 is cell-cycle dependent. It steadily increases during S phase, peaks at late S/G2 phase, and drops at G1. Phosphorylation is not required for tetramerization. Binds to DNA more strongly when dephosphorylated. Ubiquitinated. Ubiquitination at multiple sites by BRCA1 (via its N-terminal RING domain) does not lead to its proteasomal degradation but instead the ubiquitinated RBBP8 binds to chromatin following DNA damage and may play a role in G2/M checkpoint control. Ubiquitinated by RNF138 at its N-terminus. Ubiquitinated through 'Lys-48' by the E3 CUL3-KLHL15 complex; this modification leads to proteasomal degradation. Ubiquitinated by the E3 FZR1/APC/C complex; this modification leads to proteasomal degradation. As to expression, expressed in ER-positive breast cancer lines, but tends to be down-regulated ER-negative cells (at protein level).

Its subcellular location is the nucleus. It localises to the chromosome. Functionally, endonuclease that cooperates with the MRE11-RAD50-NBN (MRN) complex in DNA-end resection, the first step of double-strand break (DSB) repair through the homologous recombination (HR) pathway. HR is restricted to S and G2 phases of the cell cycle and preferentially repairs DSBs resulting from replication fork collapse. Key determinant of DSB repair pathway choice, as it commits cells to HR by preventing classical non-homologous end-joining (NHEJ). Specifically promotes the endonuclease activity of the MRN complex to clear DNA ends containing protein adducts: recruited to DSBs by NBN following phosphorylation by CDK1, and promotes the endonuclease activity of MRE11 to clear protein-DNA adducts and generate clean double-strand break ends. Functions downstream of the MRN complex and ATM, promotes ATR activation and its recruitment to DSBs in the S/G2 phase facilitating the generation of ssDNA. Component of the BRCA1-RBBP8 complex that regulates CHEK1 activation and controls cell cycle G2/M checkpoints on DNA damage. During immunoglobulin heavy chain class-switch recombination, promotes microhomology-mediated alternative end joining (A-NHEJ) and plays an essential role in chromosomal translocations. Binds preferentially to DNA Y-junctions and to DNA substrates with blocked ends and promotes intermolecular DNA bridging. In Homo sapiens (Human), this protein is DNA endonuclease RBBP8 (RBBP8).